The chain runs to 436 residues: Enolase (436 aa).

2 residues coordinate substrate: His159 and Glu168. Glu211 (proton donor) is an active-site residue. The Mg(2+) site is built by Asp246, Glu295, and Asp322. 2 residues coordinate substrate: Glu295 and Asp322. Lys347 (proton acceptor) is an active-site residue. Substrate is bound by residues 374–377 (SHRS) and Lys398.

This sequence belongs to the enolase family. In terms of assembly, homodimer. Mg(2+) serves as cofactor.

The protein localises to the cytoplasm. The enzyme catalyses (2R)-2-phosphoglycerate = phosphoenolpyruvate + H2O. It functions in the pathway carbohydrate degradation; glycolysis; pyruvate from D-glyceraldehyde 3-phosphate: step 4/5. The chain is Enolase from Neocallimastix frontalis (Rumen fungus).